The following is a 269-amino-acid chain: Proenkephalin-A (269 aa).

Residues 1–24 (MAQFLRLCIWLLALGSCLLATVQA) form the signal peptide. 3 disulfides stabilise this stretch: C26–C48, C30–C52, and C33–C65. The tract at residues 165–191 (DNRAKDSHQQESTNNDEDSTSKRYGGF) is disordered. Propeptides lie at residues 198 to 209 (SPQLEDEAKELQ) and 219 to 229 (VGRPEWWMDYQ). S253 carries the post-translational modification Phosphoserine.

Belongs to the opioid neuropeptide precursor family. In terms of processing, proenkephalin-A is cleaved by CTSL to generate Met-enkephalin. Processed and degraded by ACE. Post-translationally, probably cleaved by ACE. In terms of processing, processed by ACE to generate Met-enkephalin in the nucleus accumbens of the brain. The N-terminal domain contains 6 conserved cysteines thought to be involved in disulfide bonding and/or processing. Expressed in brain, heart and testis.

Its subcellular location is the secreted. It localises to the cytoplasmic vesicle. The protein resides in the secretory vesicle. It is found in the chromaffin granule lumen. Functionally, neuropeptide that competes with and mimic the effects of opiate drugs. They play a role in a number of physiologic functions, including pain perception and responses to stress. Its function is as follows. Met-enkephalin-Arg-Phe neuropeptide acts as a strong ligand of Mu-type opioid receptor OPRM1. Met-enkephalin-Arg-Phe-binding to OPRM1 in the nucleus accumbens of the brain increases activation of OPRM1, leading to long-term synaptic depression of glutamate release. Increases glutamate release in the striatum and decreases GABA concentration in the striatum. In terms of biological role, increases glutamate release in the striatum. The protein is Proenkephalin-A (Penk) of Rattus norvegicus (Rat).